We begin with the raw amino-acid sequence, 362 residues long: Phosphoserine aminotransferase (362 aa).

Positions 9 and 42 each coordinate L-glutamate. Pyridoxal 5'-phosphate is bound by residues 76-77 (GR), tryptophan 102, threonine 153, aspartate 174, and glutamine 197. Residue lysine 198 is modified to N6-(pyridoxal phosphate)lysine. 239-240 (NT) serves as a coordination point for pyridoxal 5'-phosphate.

This sequence belongs to the class-V pyridoxal-phosphate-dependent aminotransferase family. SerC subfamily. As to quaternary structure, homodimer. Pyridoxal 5'-phosphate is required as a cofactor.

The protein resides in the cytoplasm. It carries out the reaction O-phospho-L-serine + 2-oxoglutarate = 3-phosphooxypyruvate + L-glutamate. The enzyme catalyses 4-(phosphooxy)-L-threonine + 2-oxoglutarate = (R)-3-hydroxy-2-oxo-4-phosphooxybutanoate + L-glutamate. The protein operates within amino-acid biosynthesis; L-serine biosynthesis; L-serine from 3-phospho-D-glycerate: step 2/3. It functions in the pathway cofactor biosynthesis; pyridoxine 5'-phosphate biosynthesis; pyridoxine 5'-phosphate from D-erythrose 4-phosphate: step 3/5. Catalyzes the reversible conversion of 3-phosphohydroxypyruvate to phosphoserine and of 3-hydroxy-2-oxo-4-phosphonooxybutanoate to phosphohydroxythreonine. The polypeptide is Phosphoserine aminotransferase (Salmonella newport (strain SL254)).